The chain runs to 212 residues: Cytidylate kinase (212 aa).

7 to 15 (GPAASGKGT) is an ATP binding site.

Belongs to the cytidylate kinase family. Type 1 subfamily.

It localises to the cytoplasm. It catalyses the reaction CMP + ATP = CDP + ADP. The catalysed reaction is dCMP + ATP = dCDP + ADP. The polypeptide is Cytidylate kinase (Rhodopseudomonas palustris (strain BisB18)).